Reading from the N-terminus, the 116-residue chain is Ribonuclease T (116 aa).

Residues 18–99 (KRAILVGHNS…YDTEKTAELF (82 aa)) form the Exonuclease domain. H86 (proton donor/acceptor) is an active-site residue.

It belongs to the RNase T family. Homodimer.

Its function is as follows. Trims short 3' overhangs of a variety of RNA species, leaving a one or two nucleotide 3' overhang. Responsible for the end-turnover of tRNA: specifically removes the terminal AMP residue from uncharged tRNA (tRNA-C-C-A). Also appears to be involved in tRNA biosynthesis. The polypeptide is Ribonuclease T (Azotobacter vinelandii).